A 49-amino-acid chain; its full sequence is MAVHKYYQLSGETIKARKPICPRCGNGVFLAEHEDRMSCGRCGYTEFKK.

Zn(2+) is bound by residues cysteine 21, cysteine 24, cysteine 39, and cysteine 42. The C4-type zinc-finger motif lies at 21–42 (CPRCGNGVFLAEHEDRMSCGRC).

The protein belongs to the eukaryotic ribosomal protein eS31 family. Part of the 30S ribosomal subunit. Zn(2+) is required as a cofactor.

The polypeptide is Small ribosomal subunit protein eS31 (Methanothrix thermoacetophila (strain DSM 6194 / JCM 14653 / NBRC 101360 / PT) (Methanosaeta thermophila)).